A 306-amino-acid polypeptide reads, in one-letter code: Ribosomal protein L11 methyltransferase (306 aa).

Positions 154, 179, 201, and 242 each coordinate S-adenosyl-L-methionine.

Belongs to the methyltransferase superfamily. PrmA family.

The protein resides in the cytoplasm. It carries out the reaction L-lysyl-[protein] + 3 S-adenosyl-L-methionine = N(6),N(6),N(6)-trimethyl-L-lysyl-[protein] + 3 S-adenosyl-L-homocysteine + 3 H(+). Its function is as follows. Methylates ribosomal protein L11. The polypeptide is Ribosomal protein L11 methyltransferase (Xanthomonas axonopodis pv. citri (strain 306)).